The sequence spans 167 residues: Small ribosomal subunit protein uS5 (167 aa).

One can recognise an S5 DRBM domain in the interval 12-75; sequence LNEKLIAVNR…EKARRNIRDV (64 aa).

It belongs to the universal ribosomal protein uS5 family. In terms of assembly, part of the 30S ribosomal subunit. Contacts proteins S4 and S8.

With S4 and S12 plays an important role in translational accuracy. Functionally, located at the back of the 30S subunit body where it stabilizes the conformation of the head with respect to the body. In Psychromonas ingrahamii (strain DSM 17664 / CCUG 51855 / 37), this protein is Small ribosomal subunit protein uS5.